A 194-amino-acid polypeptide reads, in one-letter code: Methylated-DNA--protein-cysteine methyltransferase (194 aa).

Positions 125 and 139 each coordinate DNA. The active-site Nucleophile; methyl group acceptor is the cysteine 156. Serine 162 contacts DNA.

It belongs to the MGMT family.

It localises to the nucleus. It carries out the reaction a 6-O-methyl-2'-deoxyguanosine in DNA + L-cysteinyl-[protein] = S-methyl-L-cysteinyl-[protein] + a 2'-deoxyguanosine in DNA. The catalysed reaction is a 4-O-methyl-thymidine in DNA + L-cysteinyl-[protein] = a thymidine in DNA + S-methyl-L-cysteinyl-[protein]. In terms of biological role, involved in the cellular defense against the biological effects of O6-methylguanine (O6-MeG) and O4-methylthymine (O4-MeT) in DNA. Repairs the methylated nucleobase in DNA by stoichiometrically transferring the methyl group to a cysteine residue in the enzyme. This is a suicide reaction: the enzyme is irreversibly inactivated. The sequence is that of Methylated-DNA--protein-cysteine methyltransferase (MGT1) from Scheffersomyces stipitis (strain ATCC 58785 / CBS 6054 / NBRC 10063 / NRRL Y-11545) (Yeast).